We begin with the raw amino-acid sequence, 212 residues long: Dephospho-CoA kinase (212 aa).

Residues 4-204 form the DPCK domain; sequence IVALTGGICS…RDYLKAEKTT (201 aa). 12–17 is an ATP binding site; it reads CSGKSV.

It belongs to the CoaE family.

The protein localises to the cytoplasm. It carries out the reaction 3'-dephospho-CoA + ATP = ADP + CoA + H(+). It functions in the pathway cofactor biosynthesis; coenzyme A biosynthesis; CoA from (R)-pantothenate: step 5/5. Functionally, catalyzes the phosphorylation of the 3'-hydroxyl group of dephosphocoenzyme A to form coenzyme A. This chain is Dephospho-CoA kinase, found in Blochmanniella pennsylvanica (strain BPEN).